The sequence spans 368 residues: Glutamate 5-kinase (368 aa).

Lys10 contacts ATP. Substrate is bound by residues Ser50, Asp137, and Asn149. 169 to 170 (TD) contributes to the ATP binding site. The 79-residue stretch at 276 to 354 (RGTLVLDDGA…ESIVRELGYM (79 aa)) folds into the PUA domain.

This sequence belongs to the glutamate 5-kinase family.

It localises to the cytoplasm. It carries out the reaction L-glutamate + ATP = L-glutamyl 5-phosphate + ADP. The protein operates within amino-acid biosynthesis; L-proline biosynthesis; L-glutamate 5-semialdehyde from L-glutamate: step 1/2. Functionally, catalyzes the transfer of a phosphate group to glutamate to form L-glutamate 5-phosphate. The protein is Glutamate 5-kinase of Pseudomonas savastanoi pv. phaseolicola (strain 1448A / Race 6) (Pseudomonas syringae pv. phaseolicola (strain 1448A / Race 6)).